The chain runs to 697 residues: Glycine--tRNA ligase beta subunit (697 aa).

This sequence belongs to the class-II aminoacyl-tRNA synthetase family. As to quaternary structure, tetramer of two alpha and two beta subunits.

It is found in the cytoplasm. It catalyses the reaction tRNA(Gly) + glycine + ATP = glycyl-tRNA(Gly) + AMP + diphosphate. This chain is Glycine--tRNA ligase beta subunit, found in Ralstonia nicotianae (strain ATCC BAA-1114 / GMI1000) (Ralstonia solanacearum).